The primary structure comprises 738 residues: Ent-kaurene synthase-like 1 (738 aa).

Residues D487, D491, N631, D632, and E639 each contribute to the Mg(2+) site. The DDXXD motif motif lies at 487–491 (DDFFD).

The protein belongs to the terpene synthase family. Requires Mg(2+) as cofactor.

The catalysed reaction is ent-copalyl diphosphate = ent-kaur-16-ene + diphosphate. The protein operates within secondary metabolite biosynthesis; terpenoid biosynthesis. Diterpene cyclase involved in the biosynthesis of labdane-related diterpenoids (LRDs) natural products. Catalyzes the cyclization of ent-CDP into ent-kaurene. The protein is Ent-kaurene synthase-like 1 of Ricinus communis (Castor bean).